The chain runs to 356 residues: uncharacterized protein (356 aa).

3 helical membrane-spanning segments follow: residues 258–275 (SALQAAAAVIEFVAVFYY), 290–312 (PHWLSFSLLAAFTFTVVVYTEAL), and 325–347 (LVLLTLTLAILVILMATLPTLFS).

The protein localises to the cell membrane. This is an uncharacterized protein from Archaeoglobus fulgidus (strain ATCC 49558 / DSM 4304 / JCM 9628 / NBRC 100126 / VC-16).